The primary structure comprises 180 residues: Large ribosomal subunit protein uL6 (180 aa).

Belongs to the universal ribosomal protein uL6 family. As to quaternary structure, part of the 50S ribosomal subunit.

In terms of biological role, this protein binds to the 23S rRNA, and is important in its secondary structure. It is located near the subunit interface in the base of the L7/L12 stalk, and near the tRNA binding site of the peptidyltransferase center. In Borrelia duttonii (strain Ly), this protein is Large ribosomal subunit protein uL6.